A 513-amino-acid polypeptide reads, in one-letter code: MTNLLSIITFLPIVAAIIMALFLRGQDEAAARNAKWLALLTTTATFVISLFVLFRFDPANTGFQFVEDHAWIMGVCYKMGVDGISVLFVLLTTFMMPLTILSTWQVQDKVKEYMIAFLVLEGLMIGVFTALDLVLFYLFFEAGLIPMFLIIGIWGGKDRIYASFKFFLYTFLGSVLMLVAMIAMYRMAGTTDIPTLLTFDFPSENFRLLGMTVVGGMQMLLFLAFFASFAVKMPMWPVHTWLPDAHVQAPTAGSVLLAAVLLKMGGYGFLRFSLPMFPVASGVAQPYVFWLSAIAIVYTSLVALAQSDMKKVIAYSSVAHMGYVTMGVFAANQIGVDGAIFQMLSHGFISGALFLCVGVIYDRMHTREIDAYGGLVNRMPAYAAVFMFFTMANVGLPGTSGFVGEFLTLMGVFRVDTWVALVATSGVILSAAYALWLYRRVTLGQLIKESLKSITDMTPRERWVFIPLIAMTLILGVYPRLVTDVTGPAVAALVQDYNQSQPAAPVATAQASH.

The next 14 helical transmembrane spans lie at 3–23, 34–54, 81–101, 112–132, 133–153, 164–184, 211–231, 250–270, 277–297, 312–332, 340–360, 383–403, 418–438, and 463–483; these read NLLS…ALFL, AKWL…FVLF, VDGI…LTIL, EYMI…TALD, LVLF…IIGI, FKFF…MIAM, MTVV…SFAV, PTAG…YGFL, FPVA…IAIV, VIAY…FAAN, IFQM…VGVI, AAVF…SGFV, WVAL…LWLY, and WVFI…RLVT.

Belongs to the complex I subunit 4 family. NDH-1 is composed of at least 14 different subunits, Nqo1 to Nqo14. The complex has a L-shaped structure, with the hydrophobic arm (subunits Nqo7, Nqo8, Nqo10 to Nqo14) embedded in the inner membrane and the hydrophilic peripheral arm (subunits Nqo1 to Nqo6, Nqo9) protruding into the bacterial cytoplasm. The hydrophilic domain contains all the redox centers.

It is found in the cell inner membrane. The catalysed reaction is a quinone + NADH + 5 H(+)(in) = a quinol + NAD(+) + 4 H(+)(out). Its function is as follows. NDH-1 shuttles electrons from NADH, via FMN and iron-sulfur (Fe-S) centers, to quinones in the respiratory chain. The immediate electron acceptor for the enzyme in this species is believed to be ubiquinone. Couples the redox reaction to proton translocation (for every two electrons transferred, four hydrogen ions are translocated across the cytoplasmic membrane), and thus conserves the redox energy in a proton gradient. This Paracoccus denitrificans protein is NADH-quinone oxidoreductase chain 13.